Reading from the N-terminus, the 441-residue chain is uncharacterized protein (441 aa).

The span at T121 to Q143 shows a compositional bias: low complexity. 2 disordered regions span residues T121–S146 and S371–N392. Polar residues predominate over residues P382 to P391.

This is an uncharacterized protein from Dictyostelium discoideum (Social amoeba).